A 250-amino-acid chain; its full sequence is Triosephosphate isomerase (250 aa).

A substrate-binding site is contributed by 8–10; it reads NWK. Histidine 96 (electrophile) is an active-site residue. The Proton acceptor role is filled by glutamate 169. Residues glycine 175, serine 214, and 235–236 contribute to the substrate site; that span reads GG.

Belongs to the triosephosphate isomerase family. As to quaternary structure, homodimer.

Its subcellular location is the cytoplasm. It catalyses the reaction D-glyceraldehyde 3-phosphate = dihydroxyacetone phosphate. Its pathway is carbohydrate biosynthesis; gluconeogenesis. The protein operates within carbohydrate degradation; glycolysis; D-glyceraldehyde 3-phosphate from glycerone phosphate: step 1/1. In terms of biological role, involved in the gluconeogenesis. Catalyzes stereospecifically the conversion of dihydroxyacetone phosphate (DHAP) to D-glyceraldehyde-3-phosphate (G3P). In Oleidesulfovibrio alaskensis (strain ATCC BAA-1058 / DSM 17464 / G20) (Desulfovibrio alaskensis), this protein is Triosephosphate isomerase.